Consider the following 306-residue polypeptide: Putative type I specificity subunit S.MpnORF285P (306 aa).

It belongs to the type-I restriction system S methylase family. The methyltransferase is composed of M and S polypeptides.

In terms of biological role, the specificity (S) subunit of a type I methyltransferase (MTase); this subunit dictates DNA sequence specificity. The single R subunit has multiple frameshifts and is probably not expressed. In Mycoplasma pneumoniae (strain ATCC 29342 / M129 / Subtype 1) (Mycoplasmoides pneumoniae), this protein is Putative type I specificity subunit S.MpnORF285P.